The chain runs to 302 residues: Polyadenylate-binding protein 2 (302 aa).

Positions 1-12 (MAAAAAAAAAAG) are enriched in low complexity. Residues 1-111 (MAAAAAAAAA…EADPGDGAIE (111 aa)) are disordered. Ala2 carries the post-translational modification N-acetylalanine. Residues 2–141 (AAAAAAAAAA…LKELQNEVEK (140 aa)) form an interaction with SKIP region. Residue Arg17 is modified to Omega-N-methylarginine. A Phosphoserine modification is found at Ser19. Residues 30-47 (GAGGEAGEGDPGGAGDYG) are compositionally biased toward gly residues. The segment covering 51–68 (ESEELEPGELLPEPEPEE) has biased composition (acidic residues). At Ser52 the chain carries Phosphoserine. Residues 73 to 83 (PRAPPGAPGPG) show a composition bias toward pro residues. A Phosphoserine modification is found at Ser91. Residues 111–147 (EDPELEAIKARVREMEEEAEKLKELQNEVEKQMNMSP) are a coiled coil. The tract at residues 115-143 (LEAIKARVREMEEEAEKLKELQNEVEKQM) is stimulates PAPOLA. Residues Ser146 and Ser231 each carry the phosphoserine modification. The 78-residue stretch at 168–245 (RSIYVGNVDY…RQIKVIPKRT (78 aa)) folds into the RRM domain. An asymmetric dimethylarginine; alternate mark is found at Arg234, Arg255, and Arg259. Residues Arg234, Arg255, and Arg259 each carry the omega-N-methylarginine; alternate modification. The tract at residues 255-302 (RGFPRSRYRARTTNYNSSRSRFYSGFNSRPRGRIYRGRARATSWYSPY) is strong poly(A) affinity and self-association. Residues Arg261, Arg263, Arg265, Arg273, Arg275, Arg283, Arg285, Arg287, Arg290, Arg292, and Arg294 each carry the asymmetric dimethylarginine modification. Residues 282–302 (SRPRGRIYRGRARATSWYSPY) form an interaction with PAPOLA region.

Monomer and homooligomer. Identified in a IGF2BP1-dependent mRNP granule complex containing untranslated mRNAs. Binds RNA as a monomer and oligomerizes when bound to poly(A). Interacts with PAPOLA, but only in presence of oligo(A) RNA. Interacts with NUDT21/CPSF5 and transportin. Associates in a ternary complex with CPSF4 and NS/NS1 and interaction with NS/NS1, blocks nuclear export of host cell mRNAs. Associates in a single complex with SKIP and MYOD1 and interacts with SKIP in differentiated myocytes. May interact with SETX. Interacts (via RRM domain and C-terminal arginine-rich region) with ZFP36 (via hypophosphorylated form); this interaction occurs in the nucleus in a RNA-independent manner, decreases in presence of single-stranded poly(A) RNA-oligomer and in a p38-dependent-manner and may down-regulated RNA poly(A) polymerase activity. Component of the poly(A) tail exosome targeting (PAXT) complex composed of PABPN1, ZFC3H1 and MTREX. Interacts with ZFC3H1 in a RNase-insensitive manner. Interacts with FRG1. Interacts with ZC3H11A. Arginine dimethylation is asymmetric and involves PRMT1 and PRMT3. It does not influence the RNA binding properties. As to expression, ubiquitous.

The protein resides in the cytoplasm. It localises to the nucleus. It is found in the nucleus speckle. In terms of biological role, involved in the 3'-end formation of mRNA precursors (pre-mRNA) by the addition of a poly(A) tail of 200-250 nt to the upstream cleavage product. Stimulates poly(A) polymerase (PAPOLA) conferring processivity on the poly(A) tail elongation reaction and also controls the poly(A) tail length. Increases the affinity of poly(A) polymerase for RNA. Is also present at various stages of mRNA metabolism including nucleocytoplasmic trafficking and nonsense-mediated decay (NMD) of mRNA. Cooperates with SKIP to synergistically activate E-box-mediated transcription through MYOD1 and may regulate the expression of muscle-specific genes. Binds to poly(A) and to poly(G) with high affinity. May protect the poly(A) tail from degradation. Subunit of the trimeric poly(A) tail exosome targeting (PAXT) complex, a complex that directs a subset of long and polyadenylated poly(A) RNAs for exosomal degradation. The RNA exosome is fundamental for the degradation of RNA in eukaryotic nuclei. Substrate targeting is facilitated by its cofactor MTREX, which links to RNA-binding protein adapters. This Mus musculus (Mouse) protein is Polyadenylate-binding protein 2 (Pabpn1).